Consider the following 720-residue polypeptide: Methionine--tRNA ligase (720 aa).

Residues 27–37 (PYANGQIHIGH) carry the 'HIGH' region motif. 4 residues coordinate Zn(2+): Cys-158, Cys-161, Cys-171, and Cys-174. A 'KMSKS' region motif is present at residues 348–352 (KMSKS). Residue Lys-351 coordinates ATP. Positions 614–720 (DFAKVDLRIA…SGAKPGMRVK (107 aa)) constitute a tRNA-binding domain.

This sequence belongs to the class-I aminoacyl-tRNA synthetase family. MetG type 1 subfamily. Homodimer. Zn(2+) is required as a cofactor.

Its subcellular location is the cytoplasm. It carries out the reaction tRNA(Met) + L-methionine + ATP = L-methionyl-tRNA(Met) + AMP + diphosphate. Its function is as follows. Is required not only for elongation of protein synthesis but also for the initiation of all mRNA translation through initiator tRNA(fMet) aminoacylation. The chain is Methionine--tRNA ligase from Burkholderia ambifaria (strain MC40-6).